The following is a 420-amino-acid chain: Hemojuvelin (420 aa).

Positions 1–32 (MGQSPSPRSPHGSPPTLSTLTLLLLLCGQAHS) are cleaved as a signal peptide. A Phosphotyrosine modification is found at Y43. The N-linked (GlcNAc...) asparagine glycan is linked to N111. The segment at 113 to 135 (SRQGPTAPPPARGPALPGAGPAP) is disordered. The segment covering 125-134 (GPALPGAGPA) has biased composition (low complexity). Intrachain disulfides connect C141–C223 and C160–C310. N206 and N365 each carry an N-linked (GlcNAc...) asparagine glycan. D393 carries the GPI-anchor amidated aspartate lipid modification. Residues 394 to 420 (AGPPLSPAICLVPLLSALFVLWLCFSK) constitute a propeptide, removed in mature form.

The protein belongs to the repulsive guidance molecule (RGM) family. As to quaternary structure, interacts with BMP2 and BMP4. Interacts with BMP6. Interacts with BMPR1B. Interacts with TMPRSS6. Autocatalytically cleaved at low pH; the two chains remain linked via two disulfide bonds. Also proteolytically processed by TMPRSS6, several fragments being released in the extracellular space; regulates HJV activity in BMP signaling and thefore iron homeostasis. In terms of tissue distribution, muscle cell lineage.

Its subcellular location is the cell membrane. In terms of biological role, acts as a bone morphogenetic protein (BMP) coreceptor. Through enhancement of BMP signaling regulates hepcidin (HAMP) expression and regulates iron homeostasis. In Mus musculus (Mouse), this protein is Hemojuvelin.